The primary structure comprises 1173 residues: PR domain zinc finger protein 10 (1173 aa).

A disordered region spans residues 146–211; that stretch reads RLPPMEGADS…AEPPRPFDPN (66 aa). Positions 154–167 are enriched in polar residues; the sequence is DSSTTINSLPSPNA. The segment covering 172 to 202 has biased composition (acidic residues); the sequence is KEDDDDDDDDDDDEEEEDDDGEDSDLDDWEA. The 119-residue stretch at 248 to 366 folds into the SET domain; that stretch reads LPLVLYIDRF…PKQELKVWYA (119 aa). The N-terminal PR domain; essential for transcriptional activator activity stretch occupies residues 267–371; the sequence is IPKRTQFGPL…KVWYAASYAE (105 aa). The C2H2-type 1 zinc finger occupies 395–417; the sequence is WPCYECNRRFMSSEQLQQHLNSH. Positions 430–447 are enriched in basic residues; it reads RGRTRTRRKFGPGRRPGR. Residues 430–451 form a disordered region; the sequence is RGRTRTRRKFGPGRRPGRPPKF. 9 consecutive C2H2-type zinc fingers follow at residues 559 to 581, 589 to 611, 617 to 639, 645 to 668, 673 to 695, 701 to 724, 756 to 779, 801 to 824, and 863 to 886; these read FKCLQCGKAFREKEKLDQHLRFH, LTCDICNKGFISTSSLENHMKFH, YSCIFCPESFDRLDLLKDHVVVH, FSCPTCKKRFTDFIQVKKHVRSFH, YQCTECDKAFCRPDKLRLHMLRH, FLCSTCGKQFKRKDKLREHMQRMH, FKCRVCMMGFRRRGMLVNHLSKRH, YYCQYCEKVYKSASKRKAHILKNH, and VCCPHCSKQYSSKTKMVQHIRKKH. The tract at residues 926-1153 is C-terminal glutamine-rich region; essential for transcriptional activator activity; it reads QAMTELSQTL…PASNSSQTTQ (228 aa). 2 disordered regions span residues 1014 to 1056 and 1125 to 1173; these read PTSG…ANSA and KKSS…ISKP. Residues 1150-1160 show a composition bias toward low complexity; sequence QTTQYIITTTT. Polar residues predominate over residues 1161–1173; sequence NMNGSSEVHISKP.

It belongs to the class V-like SAM-binding methyltransferase superfamily.

The protein localises to the nucleus. Its function is as follows. Transcriptional activator, essential for early embryonic development and survival of embryonic stem cells (ESCs). Supports cell growth and survival during early development by transcriptionally activating the expression of the translation initiation factor EIF3B, to sustain global translation. Activates the transcription of FLNC. In Xenopus tropicalis (Western clawed frog), this protein is PR domain zinc finger protein 10 (prdm10).